We begin with the raw amino-acid sequence, 211 residues long: Molybdenum cofactor guanylyltransferase (211 aa).

GTP-binding positions include 12 to 14 (LAG), K25, N55, D73, and D103. Mg(2+) is bound at residue D103.

Belongs to the MobA family. Monomer. Requires Mg(2+) as cofactor.

It localises to the cytoplasm. It catalyses the reaction Mo-molybdopterin + GTP + H(+) = Mo-molybdopterin guanine dinucleotide + diphosphate. Functionally, transfers a GMP moiety from GTP to Mo-molybdopterin (Mo-MPT) cofactor (Moco or molybdenum cofactor) to form Mo-molybdopterin guanine dinucleotide (Mo-MGD) cofactor. The chain is Molybdenum cofactor guanylyltransferase from Albidiferax ferrireducens (strain ATCC BAA-621 / DSM 15236 / T118) (Rhodoferax ferrireducens).